We begin with the raw amino-acid sequence, 394 residues long: Elongation factor Tu (394 aa).

A tr-type G domain is found at 10–204; sequence KPHVNVGTIG…AVDSYIPQPE (195 aa). A G1 region spans residues 19 to 26; that stretch reads GHVDHGKT. 19 to 26 is a GTP binding site; the sequence is GHVDHGKT. Position 26 (threonine 26) interacts with Mg(2+). The G2 stretch occupies residues 60 to 64; that stretch reads GITIS. Residues 81–84 are G3; sequence DCPG. GTP contacts are provided by residues 81–85 and 136–139; these read DCPGH and NKCD. The interval 136–139 is G4; that stretch reads NKCD. The tract at residues 174–176 is G5; it reads SAV.

Belongs to the TRAFAC class translation factor GTPase superfamily. Classic translation factor GTPase family. EF-Tu/EF-1A subfamily. As to quaternary structure, monomer.

Its subcellular location is the cytoplasm. The catalysed reaction is GTP + H2O = GDP + phosphate + H(+). Functionally, GTP hydrolase that promotes the GTP-dependent binding of aminoacyl-tRNA to the A-site of ribosomes during protein biosynthesis. This chain is Elongation factor Tu, found in Akkermansia muciniphila (strain ATCC BAA-835 / DSM 22959 / JCM 33894 / BCRC 81048 / CCUG 64013 / CIP 107961 / Muc).